Here is a 375-residue protein sequence, read N- to C-terminus: N-acetyldiaminopimelate deacetylase (375 aa).

Aspartate 69 is a catalytic residue. Glutamate 128 acts as the Proton acceptor in catalysis.

It belongs to the peptidase M20A family. N-acetyldiaminopimelate deacetylase subfamily.

The catalysed reaction is N-acetyl-(2S,6S)-2,6-diaminopimelate + H2O = (2S,6S)-2,6-diaminopimelate + acetate. It participates in amino-acid biosynthesis; L-lysine biosynthesis via DAP pathway; LL-2,6-diaminopimelate from (S)-tetrahydrodipicolinate (acetylase route): step 3/3. In terms of biological role, catalyzes the conversion of N-acetyl-diaminopimelate to diaminopimelate and acetate. This chain is N-acetyldiaminopimelate deacetylase, found in Streptococcus suis (strain 05ZYH33).